The sequence spans 505 residues: Lysine--tRNA ligase (505 aa).

The Mg(2+) site is built by Glu415 and Glu422.

This sequence belongs to the class-II aminoacyl-tRNA synthetase family. As to quaternary structure, homodimer. Mg(2+) is required as a cofactor.

The protein localises to the cytoplasm. The enzyme catalyses tRNA(Lys) + L-lysine + ATP = L-lysyl-tRNA(Lys) + AMP + diphosphate. In Citrobacter koseri (strain ATCC BAA-895 / CDC 4225-83 / SGSC4696), this protein is Lysine--tRNA ligase.